The primary structure comprises 597 residues: UvrABC system protein C (597 aa).

The region spanning 15–93 (DNPGVYQYYD…IKTLQPRYNV (79 aa)) is the GIY-YIG domain. A UVR domain is found at 207 to 242 (KESLKDFKKLMNNYAQNLQFEEAQKIKEKIEVLENY).

The protein belongs to the UvrC family. In terms of assembly, interacts with UvrB in an incision complex.

Its subcellular location is the cytoplasm. Its function is as follows. The UvrABC repair system catalyzes the recognition and processing of DNA lesions. UvrC both incises the 5' and 3' sides of the lesion. The N-terminal half is responsible for the 3' incision and the C-terminal half is responsible for the 5' incision. The protein is UvrABC system protein C of Flavobacterium johnsoniae (strain ATCC 17061 / DSM 2064 / JCM 8514 / BCRC 14874 / CCUG 350202 / NBRC 14942 / NCIMB 11054 / UW101) (Cytophaga johnsonae).